The chain runs to 102 residues: Small ribosomal subunit protein uS10 (102 aa).

It belongs to the universal ribosomal protein uS10 family. As to quaternary structure, part of the 30S ribosomal subunit.

Its function is as follows. Involved in the binding of tRNA to the ribosomes. This is Small ribosomal subunit protein uS10 from Methanothrix thermoacetophila (strain DSM 6194 / JCM 14653 / NBRC 101360 / PT) (Methanosaeta thermophila).